The following is a 195-amino-acid chain: Interferon omega-1 (195 aa).

Positions 1–23 (MAFSVSSLMALVVISSSPVSSMS) are cleaved as a signal peptide. Cystine bridges form between Cys24/Cys122 and Cys52/Cys162. An N-linked (GlcNAc...) asparagine glycan is attached at Asn101.

It belongs to the alpha/beta interferon family.

Its subcellular location is the secreted. In Equus caballus (Horse), this protein is Interferon omega-1.